Reading from the N-terminus, the 974-residue chain is Glycine dehydrogenase (decarboxylating) (974 aa).

At K720 the chain carries N6-(pyridoxal phosphate)lysine.

It belongs to the GcvP family. In terms of assembly, the glycine cleavage system is composed of four proteins: P, T, L and H. Pyridoxal 5'-phosphate serves as cofactor.

The catalysed reaction is N(6)-[(R)-lipoyl]-L-lysyl-[glycine-cleavage complex H protein] + glycine + H(+) = N(6)-[(R)-S(8)-aminomethyldihydrolipoyl]-L-lysyl-[glycine-cleavage complex H protein] + CO2. Its function is as follows. The glycine cleavage system catalyzes the degradation of glycine. The P protein binds the alpha-amino group of glycine through its pyridoxal phosphate cofactor; CO(2) is released and the remaining methylamine moiety is then transferred to the lipoamide cofactor of the H protein. The sequence is that of Glycine dehydrogenase (decarboxylating) from Cupriavidus metallidurans (strain ATCC 43123 / DSM 2839 / NBRC 102507 / CH34) (Ralstonia metallidurans).